Here is a 422-residue protein sequence, read N- to C-terminus: UDP-N-acetylglucosamine 1-carboxyvinyltransferase (422 aa).

A phosphoenolpyruvate-binding site is contributed by 23 to 24; the sequence is KN. Residue R92 coordinates UDP-N-acetyl-alpha-D-glucosamine. The Proton donor role is filled by C116. At C116 the chain carries 2-(S-cysteinyl)pyruvic acid O-phosphothioketal. UDP-N-acetyl-alpha-D-glucosamine contacts are provided by residues 121 to 125, 161 to 164, D306, and I328; these read RPVDL and KVSV.

This sequence belongs to the EPSP synthase family. MurA subfamily.

It is found in the cytoplasm. The catalysed reaction is phosphoenolpyruvate + UDP-N-acetyl-alpha-D-glucosamine = UDP-N-acetyl-3-O-(1-carboxyvinyl)-alpha-D-glucosamine + phosphate. Its pathway is cell wall biogenesis; peptidoglycan biosynthesis. Cell wall formation. Adds enolpyruvyl to UDP-N-acetylglucosamine. This Aliivibrio fischeri (strain ATCC 700601 / ES114) (Vibrio fischeri) protein is UDP-N-acetylglucosamine 1-carboxyvinyltransferase.